Reading from the N-terminus, the 115-residue chain is uncharacterized protein (115 aa).

At 1–11 (MKLTKEKKNDC) the chain is on the cytoplasmic side. A helical transmembrane segment spans residues 12–32 (LVGVSYIPPLNFFTLTFLFLL). Topologically, residues 33–52 (RIEKVHLSLSLSLSLSLRFY) are extracellular. A helical transmembrane segment spans residues 53–73 (YFHNVCYPSLFLFFCFVIPFF). Over 74–78 (YSVRF) the chain is Cytoplasmic. A helical membrane pass occupies residues 79–98 (ILLYLHILRSFYELNILLLY). Over 99 to 115 (GAENSRRQSPPGYYVIR) the chain is Extracellular.

The protein localises to the membrane. This is an uncharacterized protein from Saccharomyces cerevisiae (strain ATCC 204508 / S288c) (Baker's yeast).